A 324-amino-acid chain; its full sequence is Lipoyl synthase (324 aa).

C72, C77, C83, C98, C102, C105, and S313 together coordinate [4Fe-4S] cluster. One can recognise a Radical SAM core domain in the interval 84-302; that stretch reads FRFGTASFMI…AQEGKKMGFL (219 aa).

Belongs to the radical SAM superfamily. Lipoyl synthase family. The cofactor is [4Fe-4S] cluster.

The protein localises to the cytoplasm. The enzyme catalyses [[Fe-S] cluster scaffold protein carrying a second [4Fe-4S](2+) cluster] + N(6)-octanoyl-L-lysyl-[protein] + 2 oxidized [2Fe-2S]-[ferredoxin] + 2 S-adenosyl-L-methionine + 4 H(+) = [[Fe-S] cluster scaffold protein] + N(6)-[(R)-dihydrolipoyl]-L-lysyl-[protein] + 4 Fe(3+) + 2 hydrogen sulfide + 2 5'-deoxyadenosine + 2 L-methionine + 2 reduced [2Fe-2S]-[ferredoxin]. The protein operates within protein modification; protein lipoylation via endogenous pathway; protein N(6)-(lipoyl)lysine from octanoyl-[acyl-carrier-protein]: step 2/2. Its function is as follows. Catalyzes the radical-mediated insertion of two sulfur atoms into the C-6 and C-8 positions of the octanoyl moiety bound to the lipoyl domains of lipoate-dependent enzymes, thereby converting the octanoylated domains into lipoylated derivatives. In Dichelobacter nodosus (strain VCS1703A), this protein is Lipoyl synthase.